A 314-amino-acid polypeptide reads, in one-letter code: Methionyl-tRNA formyltransferase (314 aa).

110–113 (SLLP) provides a ligand contact to (6S)-5,6,7,8-tetrahydrofolate.

It belongs to the Fmt family.

It carries out the reaction L-methionyl-tRNA(fMet) + (6R)-10-formyltetrahydrofolate = N-formyl-L-methionyl-tRNA(fMet) + (6S)-5,6,7,8-tetrahydrofolate + H(+). Attaches a formyl group to the free amino group of methionyl-tRNA(fMet). The formyl group appears to play a dual role in the initiator identity of N-formylmethionyl-tRNA by promoting its recognition by IF2 and preventing the misappropriation of this tRNA by the elongation apparatus. This chain is Methionyl-tRNA formyltransferase, found in Bacillus anthracis (strain A0248).